The sequence spans 605 residues: DNA mismatch repair protein MutL (605 aa).

Belongs to the DNA mismatch repair MutL/HexB family.

In terms of biological role, this protein is involved in the repair of mismatches in DNA. It is required for dam-dependent methyl-directed DNA mismatch repair. May act as a 'molecular matchmaker', a protein that promotes the formation of a stable complex between two or more DNA-binding proteins in an ATP-dependent manner without itself being part of a final effector complex. In Rhizobium meliloti (strain 1021) (Ensifer meliloti), this protein is DNA mismatch repair protein MutL.